The sequence spans 190 residues: Peptidyl-prolyl cis-trans isomerase FKBP20-1 (190 aa).

At Gly2 the chain carries N-acetylglycine. Residues 32–121 (LPVVDVHYEG…IFEVELVACR (90 aa)) enclose the PPIase FKBP-type domain. Basic and acidic residues predominate over residues 149 to 163 (AAAKEDDKKKREEAK). The tract at residues 149–190 (AAAKEDDKKKREEAKAAAAARIQAKLDAKKGPGKGKGKGKAK) is disordered. Over residues 179-190 (GPGKGKGKGKAK) the composition is skewed to basic residues.

This sequence belongs to the FKBP-type PPIase family.

The enzyme catalyses [protein]-peptidylproline (omega=180) = [protein]-peptidylproline (omega=0). Functionally, PPIases accelerate the folding of proteins. It catalyzes the cis-trans isomerization of proline imidic peptide bonds in oligopeptides. The sequence is that of Peptidyl-prolyl cis-trans isomerase FKBP20-1 (FKBP20-1) from Arabidopsis thaliana (Mouse-ear cress).